Here is a 377-residue protein sequence, read N- to C-terminus: Mannan endo-1,4-beta-mannosidase A (377 aa).

Residues 1–18 (MKLSHMLLSLASLGVATA) form the signal peptide. Residue Trp84 participates in substrate binding. N-linked (GlcNAc...) asparagine glycosylation is present at Asn105. Asn197 contributes to the substrate binding site. Glu198 (proton donor) is an active-site residue. Residue Asn255 is glycosylated (N-linked (GlcNAc...) asparagine). Position 273 (Tyr273) interacts with substrate. Residue Glu306 is the Nucleophile of the active site. An N-linked (GlcNAc...) asparagine glycan is attached at Asn326. Trp336 lines the substrate pocket. Asn357 is a glycosylation site (N-linked (GlcNAc...) asparagine).

The protein belongs to the glycosyl hydrolase 5 (cellulase A) family.

It localises to the secreted. It catalyses the reaction Random hydrolysis of (1-&gt;4)-beta-D-mannosidic linkages in mannans, galactomannans and glucomannans.. Functionally, endo-1,4-mannanase, a crucial enzyme for depolymerization of seed galactomannans and wood galactoglucomannans. This Aspergillus aculeatus protein is Mannan endo-1,4-beta-mannosidase A (manA).